A 919-amino-acid polypeptide reads, in one-letter code: Tight junction protein ZO-3 (919 aa).

Positions 11 to 93 constitute a PDZ 1 domain; sequence TATLSKDPRR…MANITVKRPR (83 aa). Residues 92 to 173 are disordered; the sequence is PRRIHLPATK…SPGGGSEANG (82 aa). Residue Ser112 is modified to Phosphoserine. The span at 117-131 shows a compositional bias: basic and acidic residues; that stretch reads GPQRVEEVDQGRGYD. Ser136 is subject to Phosphoserine. Residues 147 to 163 are compositionally biased toward basic residues; it reads RRPRPGRRGRAGSHGRR. Ser164, Ser169, Ser203, and Ser319 each carry phosphoserine. Residues 195-272 form the PDZ 2 domain; that stretch reads SVLVKRRDSE…KLSLLVLRDR (78 aa). The tract at residues 279–377 is disordered; sequence IPPAVSDSDS…SSQSMEDRGY (99 aa). A Phosphothreonine modification is found at Thr325. A Phosphoserine modification is found at Ser327. Residues 332–360 show a composition bias toward basic and acidic residues; it reads PRLRRESSVDSRTISEPDEQRSELPRESS. Ser371 is modified (phosphoserine). The PDZ 3 domain maps to 380 to 446; that stretch reads DTRVVRFLKG…LTREEAVQFL (67 aa). The SH3 domain occupies 475-549; the sequence is GDSFYIRTHF…PNQSRAEQLA (75 aa). Positions 580–761 constitute a Guanylate kinase-like domain; the sequence is LRRGAKKTTQ…WYQELKAIIR (182 aa). Phosphoserine is present on Ser591. Residues 791–801 show a composition bias toward low complexity; it reads ADSSADLSCDS. Disordered stretches follow at residues 791–886 and 899–919; these read ADSS…DSMR and RVHD…ATDL. A compositionally biased stretch (gly residues) spans 812-828; it reads EGGAYTDGEGYTDGEGG. 3 positions are modified to phosphoserine: Ser856, Ser905, and Ser906.

Belongs to the MAGUK family. In terms of assembly, interacts with occludin OCLN, claudins and TPJ1. Interacts with PATJ. Interacts with UBN1. Interacts with FASLG. Interacts with CCND1. In terms of processing, phosphorylated.

The protein localises to the cell membrane. The protein resides in the cell junction. It is found in the tight junction. Its subcellular location is the nucleus. In terms of biological role, TJP1, TJP2, and TJP3 are closely related scaffolding proteins that link tight junction (TJ) transmembrane proteins such as claudins, junctional adhesion molecules, and occludin to the actin cytoskeleton. The tight junction acts to limit movement of substances through the paracellular space and as a boundary between the compositionally distinct apical and basolateral plasma membrane domains of epithelial and endothelial cells. Binds and recruits PATJ to tight junctions where it connects and stabilizes apical and lateral components of tight junctions. Promotes cell-cycle progression through the sequestration of cyclin D1 (CCND1) at tight junctions during mitosis which prevents CCND1 degradation during M-phase and enables S-phase transition. With TJP1 and TJP2, participates in the junctional retention and stability of the transcription factor DBPA, but is not involved in its shuttling to the nucleus. Contrary to TJP2, TJP3 is dispensable for individual viability, embryonic development, epithelial differentiation, and the establishment of TJs, at least in the laboratory environment. The chain is Tight junction protein ZO-3 (TJP3) from Homo sapiens (Human).